The following is a 532-amino-acid chain: Bone morphogenetic protein receptor type-1A (532 aa).

The first 23 residues, 1 to 23 (MPQLYIYIRLLGAYLFIISRVQG), serve as a signal peptide directing secretion. Over 24–152 (QNLDSMLHGT…IGPFFDGSIR (129 aa)) the chain is Extracellular. Intrachain disulfides connect Cys61/Cys82, Cys63/Cys67, and Cys76/Cys100. Residue Asn73 is glycosylated (N-linked (GlcNAc...) asparagine). Positions 107–109 (DFQ) are mediates specificity for BMP ligand. Intrachain disulfides connect Cys110-Cys124 and Cys125-Cys130. Residues 153-176 (WLVLLISMAVCIIAMIIFSSCFCY) traverse the membrane as a helical segment. Topologically, residues 177-532 (KHYCKSISSR…KMVESQDVKI (356 aa)) are cytoplasmic. A GS domain is found at 204 to 233 (ESLKDLIDQSQSSGSGSGLPLLVQRTIAKQ). Positions 234-525 (IQMVRQVGKG…RIKKTLAKMV (292 aa)) constitute a Protein kinase domain. Residues 240–248 (VGKGRYGEV) and Lys261 each bind ATP. Asp362 (proton acceptor) is an active-site residue.

It belongs to the protein kinase superfamily. TKL Ser/Thr protein kinase family. TGFB receptor subfamily. In terms of assembly, interacts with low affinity with GDF5; positively regulates chondrocyte differentiation. Interacts with BMP4. Interacts with SCUBE3. Interacts with TSC22D1/TSC-22. Interacts with BMP2; the interaction may induce HAMP expression. Interacts with BMP6. Interacts with heterodimers composed of BMP2 and BMP6 in vitro; the interaction may induce HAMP expression. Interacts with TGFBR3. Requires Mg(2+) as cofactor. It depends on Mn(2+) as a cofactor. Glycosylated. Highly expressed in skeletal muscle.

Its subcellular location is the cell membrane. It is found in the cell surface. The catalysed reaction is L-threonyl-[receptor-protein] + ATP = O-phospho-L-threonyl-[receptor-protein] + ADP + H(+). The enzyme catalyses L-seryl-[receptor-protein] + ATP = O-phospho-L-seryl-[receptor-protein] + ADP + H(+). Functionally, on ligand binding, forms a receptor complex consisting of two type II and two type I transmembrane serine/threonine kinases. Type II receptors phosphorylate and activate type I receptors which autophosphorylate, then bind and activate SMAD transcriptional regulators. Receptor for BMP2, BMP4, GDF5 and GDF6. Positively regulates chondrocyte differentiation through GDF5 interaction. Mediates induction of adipogenesis by GDF6. May promote the expression of HAMP, potentially via its interaction with BMP2. This is Bone morphogenetic protein receptor type-1A (BMPR1A) from Homo sapiens (Human).